The following is a 116-amino-acid chain: Large ribosomal subunit protein uL18 (116 aa).

Belongs to the universal ribosomal protein uL18 family. As to quaternary structure, part of the 50S ribosomal subunit; part of the 5S rRNA/L5/L18/L25 subcomplex. Contacts the 5S and 23S rRNAs.

In terms of biological role, this is one of the proteins that bind and probably mediate the attachment of the 5S RNA into the large ribosomal subunit, where it forms part of the central protuberance. The sequence is that of Large ribosomal subunit protein uL18 from Pseudomonas putida (strain W619).